We begin with the raw amino-acid sequence, 56 residues long: Small ribosomal subunit protein bS21 (56 aa).

It belongs to the bacterial ribosomal protein bS21 family.

This Synechococcus sp. (strain WH7803) protein is Small ribosomal subunit protein bS21.